The primary structure comprises 387 residues: Limonene 1,2-monooxygenase (387 aa).

Belongs to the bacterial luciferase oxidoreductase family. FAD is required as a cofactor.

It carries out the reaction (4S)-limonene + NADPH + O2 + H(+) = limonene 1,2-epoxide + NADP(+) + H2O. It catalyses the reaction (4S)-limonene + NADH + O2 + H(+) = limonene 1,2-epoxide + NAD(+) + H2O. The catalysed reaction is (4R)-limonene + NADH + O2 + H(+) = limonene 1,2-epoxide + NAD(+) + H2O. The enzyme catalyses (4R)-limonene + NADPH + O2 + H(+) = limonene 1,2-epoxide + NADP(+) + H2O. The protein operates within terpene metabolism; (4R)-limonene degradation; (1S,4R)-1-hydroxylimonen-2-one from (4R)-limonene: step 1/3. Its function is as follows. Acts on both enantiomers of limonene by their NAD-dependent epoxidation at the 1,2 double bond forming limonene-1,2-epoxide. In Rhodococcus erythropolis (Arthrobacter picolinophilus), this protein is Limonene 1,2-monooxygenase (limB).